The primary structure comprises 376 residues: Chaperone protein DnaJ (376 aa).

Positions 5 to 70 (DYYEVLGVGR…DKKAAYDQFG (66 aa)) constitute a J domain. The CR-type zinc-finger motif lies at 132-210 (GLTKELRIPT…CHGDGRVEKS (79 aa)). Residues cysteine 145, cysteine 148, cysteine 162, cysteine 165, cysteine 184, cysteine 187, cysteine 198, and cysteine 201 each coordinate Zn(2+). CXXCXGXG motif repeat units lie at residues 145-152 (CDLCDGSG), 162-169 (CTTCHGQG), 184-191 (CPTCHGRG), and 198-205 (CSKCHGDG).

The protein belongs to the DnaJ family. Homodimer. It depends on Zn(2+) as a cofactor.

It is found in the cytoplasm. Functionally, participates actively in the response to hyperosmotic and heat shock by preventing the aggregation of stress-denatured proteins and by disaggregating proteins, also in an autonomous, DnaK-independent fashion. Unfolded proteins bind initially to DnaJ; upon interaction with the DnaJ-bound protein, DnaK hydrolyzes its bound ATP, resulting in the formation of a stable complex. GrpE releases ADP from DnaK; ATP binding to DnaK triggers the release of the substrate protein, thus completing the reaction cycle. Several rounds of ATP-dependent interactions between DnaJ, DnaK and GrpE are required for fully efficient folding. Also involved, together with DnaK and GrpE, in the DNA replication of plasmids through activation of initiation proteins. This chain is Chaperone protein DnaJ, found in Shewanella sp. (strain W3-18-1).